Consider the following 340-residue polypeptide: DNA-directed RNA polymerase subunit alpha (340 aa).

Residues 1-233 (MYRNWRDLIS…EQLSIFINFD (233 aa)) are alpha N-terminal domain (alpha-NTD). An alpha C-terminal domain (alpha-CTD) region spans residues 251 to 340 (VNENLYRSVD…RIRGERKDEE (90 aa)).

The protein belongs to the RNA polymerase alpha chain family. As to quaternary structure, homodimer. The RNAP catalytic core consists of 2 alpha, 1 beta, 1 beta' and 1 omega subunit. When a sigma factor is associated with the core the holoenzyme is formed, which can initiate transcription.

It catalyses the reaction RNA(n) + a ribonucleoside 5'-triphosphate = RNA(n+1) + diphosphate. Its function is as follows. DNA-dependent RNA polymerase catalyzes the transcription of DNA into RNA using the four ribonucleoside triphosphates as substrates. This is DNA-directed RNA polymerase subunit alpha from Geobacter metallireducens (strain ATCC 53774 / DSM 7210 / GS-15).